A 426-amino-acid polypeptide reads, in one-letter code: Serine--tRNA ligase (426 aa).

232–234 contributes to the L-serine binding site; it reads TAE. Residue 263 to 265 coordinates ATP; sequence RRE. E286 contacts L-serine. 350-353 contributes to the ATP binding site; it reads EISS. Residue S385 participates in L-serine binding.

Belongs to the class-II aminoacyl-tRNA synthetase family. Type-1 seryl-tRNA synthetase subfamily. Homodimer. The tRNA molecule binds across the dimer.

It is found in the cytoplasm. It catalyses the reaction tRNA(Ser) + L-serine + ATP = L-seryl-tRNA(Ser) + AMP + diphosphate + H(+). The catalysed reaction is tRNA(Sec) + L-serine + ATP = L-seryl-tRNA(Sec) + AMP + diphosphate + H(+). It functions in the pathway aminoacyl-tRNA biosynthesis; selenocysteinyl-tRNA(Sec) biosynthesis; L-seryl-tRNA(Sec) from L-serine and tRNA(Sec): step 1/1. Functionally, catalyzes the attachment of serine to tRNA(Ser). Is also able to aminoacylate tRNA(Sec) with serine, to form the misacylated tRNA L-seryl-tRNA(Sec), which will be further converted into selenocysteinyl-tRNA(Sec). The chain is Serine--tRNA ligase from Fervidobacterium nodosum (strain ATCC 35602 / DSM 5306 / Rt17-B1).